Consider the following 553-residue polypeptide: Dihydrolipoyllysine-residue acetyltransferase component of pyruvate dehydrogenase complex (553 aa).

One can recognise a Lipoyl-binding 1 domain in the interval 4–78 (AIEIKVPDIG…SEGSVLVMLE (75 aa)). The residue at position 44 (Lys44) is an N6-lipoyllysine. Residues 97-118 (AAAAPAPAPAPAAAPAAAPAAG) are disordered. The Lipoyl-binding 2 domain occupies 122 to 196 (TIEVKVPDIG…AEGTLLLILE (75 aa)). Lys162 carries the N6-lipoyllysine modification. The region spanning 250–287 (HASPSVRKFARELGVDVSRVPGTGPKGRITQEDVQGYV) is the Peripheral subunit-binding (PSBD) domain. His526 is an active-site residue.

The protein belongs to the 2-oxoacid dehydrogenase family. As to quaternary structure, forms a 24-polypeptide structural core with octahedral symmetry. (R)-lipoate serves as cofactor.

It catalyses the reaction N(6)-[(R)-dihydrolipoyl]-L-lysyl-[protein] + acetyl-CoA = N(6)-[(R)-S(8)-acetyldihydrolipoyl]-L-lysyl-[protein] + CoA. Its function is as follows. The pyruvate dehydrogenase complex catalyzes the overall conversion of pyruvate to acetyl-CoA and CO(2). It contains multiple copies of three enzymatic components: pyruvate dehydrogenase (E1), dihydrolipoamide acetyltransferase (E2) and lipoamide dehydrogenase (E3). In Cupriavidus necator (strain ATCC 17699 / DSM 428 / KCTC 22496 / NCIMB 10442 / H16 / Stanier 337) (Ralstonia eutropha), this protein is Dihydrolipoyllysine-residue acetyltransferase component of pyruvate dehydrogenase complex (pdhB).